The primary structure comprises 215 residues: 3-demethoxyubiquinol 3-hydroxylase (215 aa).

Fe cation contacts are provided by Glu64, Glu94, His97, Glu146, Glu178, and His181.

This sequence belongs to the COQ7 family. Fe cation serves as cofactor.

The protein localises to the cell membrane. It carries out the reaction a 5-methoxy-2-methyl-3-(all-trans-polyprenyl)benzene-1,4-diol + AH2 + O2 = a 3-demethylubiquinol + A + H2O. The protein operates within cofactor biosynthesis; ubiquinone biosynthesis. In terms of biological role, catalyzes the hydroxylation of 2-nonaprenyl-3-methyl-6-methoxy-1,4-benzoquinol during ubiquinone biosynthesis. This Pseudomonas fluorescens (strain SBW25) protein is 3-demethoxyubiquinol 3-hydroxylase.